The sequence spans 464 residues: Fumarate hydratase class II (464 aa).

Substrate contacts are provided by residues 98–100 (SGT), 129–132 (HPND), 139–141 (SSN), and Thr187. His188 acts as the Proton donor/acceptor in catalysis. Ser318 is a catalytic residue. Residues Ser319 and 324–326 (KVN) contribute to the substrate site.

This sequence belongs to the class-II fumarase/aspartase family. Fumarase subfamily. In terms of assembly, homotetramer.

It localises to the cytoplasm. It catalyses the reaction (S)-malate = fumarate + H2O. It functions in the pathway carbohydrate metabolism; tricarboxylic acid cycle; (S)-malate from fumarate: step 1/1. Involved in the TCA cycle. Catalyzes the stereospecific interconversion of fumarate to L-malate. The chain is Fumarate hydratase class II from Pasteurella multocida (strain Pm70).